We begin with the raw amino-acid sequence, 1032 residues long: Probable ATP-dependent RNA helicase DDX46 (1032 aa).

Positions 1 to 24 (MGRESRHYRKRSASRGRSGSRSRS) are enriched in basic residues. The disordered stretch occupies residues 1–227 (MGRESRHYRK…NEMEDEELDP (227 aa)). The N-myristoyl glycine moiety is linked to residue Gly2. Residues 26–49 (SPSDKRSKRGDDRRSRSRDRDRRR) are compositionally biased toward basic and acidic residues. 2 stretches are compositionally biased toward basic residues: residues 50 to 73 (ERSR…RSRS) and 81 to 103 (ERRR…RRSR). Positions 112 to 200 (KKAENRSRSK…EMKQGKKWSL (89 aa)) are enriched in basic and acidic residues. Residues 152–197 (DQNKLEEEMRKRKERVEKWREEQRKKAMENIGELKKEIEEMKQGKK) are a coiled coil. A Glycyl lysine isopeptide (Lys-Gly) (interchain with G-Cter in SUMO2) cross-link involves residue Lys186. Ser199 carries the phosphoserine modification. A compositionally biased stretch (acidic residues) spans 201 to 211 (EDDDDDEDDPA). Lys263 is modified (N6-acetyllysine). A Phosphotyrosine modification is found at Tyr294. Phosphoserine is present on residues Ser295 and Ser296. A Glycyl lysine isopeptide (Lys-Gly) (interchain with G-Cter in SUMO2) cross-link involves residue Lys325. Position 346 is a phosphoserine (Ser346). The short motif at 372-400 (KSWVQCGISMKILNSLKKHGYEKPTPIQT) is the Q motif element. The region spanning 403–581 (IPAIMSGRDL…RRILSKPIEV (179 aa)) is the Helicase ATP-binding domain. The DEAD box motif lies at 529–532 (DEAD). The region spanning 592-753 (DVEQQVIVIE…AVPPDLEKLW (162 aa)) is the Helicase C-terminal domain. N6-acetyllysine is present on Lys776. Lys779 is covalently cross-linked (Glycyl lysine isopeptide (Lys-Gly) (interchain with G-Cter in SUMO2)). The residue at position 804 (Ser804) is a Phosphoserine. Position 904 is an N6-acetyllysine (Lys904). Glycyl lysine isopeptide (Lys-Gly) (interchain with G-Cter in SUMO2) cross-links involve residues Lys908 and Lys916. Ser929 bears the Phosphoserine mark.

The protein belongs to the DEAD box helicase family. DDX46/PRP5 subfamily. Component of the 17S U2 SnRNP complex, a ribonucleoprotein complex that contains small nuclear RNA (snRNA) U2 and a number of specific proteins. Within the 17S U2 SnRNP complex, DDX46 is part of the SF3B subcomplex, which is required for 'A' complex assembly formed by the stable binding of U2 snRNP to the branchpoint sequence in pre-mRNA. Recruited to the 17S U2 SnRNP complex following release of DDX42; DDX42 and DDX46 bind the SF3B subcomplex in a competitive manner.

The protein resides in the nucleus speckle. It is found in the nucleus. Its subcellular location is the cajal body. The catalysed reaction is ATP + H2O = ADP + phosphate + H(+). Its function is as follows. Component of the 17S U2 SnRNP complex of the spliceosome, a large ribonucleoprotein complex that removes introns from transcribed pre-mRNAs. The 17S U2 SnRNP complex (1) directly participates in early spliceosome assembly and (2) mediates recognition of the intron branch site during pre-mRNA splicing by promoting the selection of the pre-mRNA branch-site adenosine, the nucleophile for the first step of splicing. Within the 17S U2 SnRNP complex, DDX46 plays essential roles during assembly of pre-spliceosome and proofreading of the branch site. The sequence is that of Probable ATP-dependent RNA helicase DDX46 (Ddx46) from Rattus norvegicus (Rat).